The following is a 402-amino-acid chain: LIM homeobox transcription factor 1-beta (402 aa).

LIM zinc-binding domains lie at 56–106 and 115–168; these read CEGC…CKQD and CSGC…CKGD. Disordered regions lie at residues 176-229 and 326-346; these read LSSV…LTTQ and PYGSSDPFQQGLTPPQMPGDH. The homeobox DNA-binding region spans 219–278; the sequence is PKRPRTILTTQQRRAFKASFEVSSKPCRKVRETLAAETGLSVRVVQVWFQNQRAKMKKLA. The segment covering 326–338 has biased composition (polar residues); sequence PYGSSDPFQQGLT.

In terms of assembly, interacts with DHX9. In terms of tissue distribution, expressed in most tissues. Highest levels in testis, thyroid, duodenum, skeletal muscle, and pancreatic islets.

The protein resides in the nucleus. Its function is as follows. Transcription factor involved in the regulation of podocyte-expressed genes. Essential for the specification of dorsal limb fate at both the zeugopodal and autopodal levels. The chain is LIM homeobox transcription factor 1-beta (LMX1B) from Homo sapiens (Human).